We begin with the raw amino-acid sequence, 345 residues long: Anthranilate phosphoribosyltransferase (345 aa).

Residues Gly-84, 87-88 (GD), Thr-92, 94-97 (NIST), 112-120 (KHGNRSVSS), and Ser-124 each bind 5-phospho-alpha-D-ribose 1-diphosphate. Gly-84 provides a ligand contact to anthranilate. Residue Ser-96 participates in Mg(2+) binding. Residue Asn-115 coordinates anthranilate. Arg-170 serves as a coordination point for anthranilate. Residues Asp-229 and Glu-230 each coordinate Mg(2+).

The protein belongs to the anthranilate phosphoribosyltransferase family. As to quaternary structure, homodimer. It depends on Mg(2+) as a cofactor.

The catalysed reaction is N-(5-phospho-beta-D-ribosyl)anthranilate + diphosphate = 5-phospho-alpha-D-ribose 1-diphosphate + anthranilate. Its pathway is amino-acid biosynthesis; L-tryptophan biosynthesis; L-tryptophan from chorismate: step 2/5. In terms of biological role, catalyzes the transfer of the phosphoribosyl group of 5-phosphorylribose-1-pyrophosphate (PRPP) to anthranilate to yield N-(5'-phosphoribosyl)-anthranilate (PRA). The chain is Anthranilate phosphoribosyltransferase from Xanthomonas oryzae pv. oryzae (strain MAFF 311018).